Consider the following 85-residue polypeptide: U4-theraphotoxin-Hhn1a (85 aa).

An N-terminal signal peptide occupies residues 1–22 (MKVTLIAILTCATVLVLHTTAA). Positions 23-48 (EELEAESQLMEVGMPDTELAAVDEER) are excised as a propeptide. Disulfide bonds link cysteine 52–cysteine 66, cysteine 56–cysteine 77, and cysteine 71–cysteine 82.

Belongs to the neurotoxin 12 (Hwtx-2) family. 02 (Hwtx-2) subfamily. In terms of assembly, monomer. In terms of tissue distribution, expressed by the venom gland.

The protein resides in the secreted. Its function is as follows. Neurotoxin active on both insects and mammals. The sequence is that of U4-theraphotoxin-Hhn1a from Cyriopagopus hainanus (Chinese bird spider).